A 337-amino-acid chain; its full sequence is Heme A synthase (337 aa).

5 helical membrane passes run 6–26 (ITKWLFISCIMVIAMIVIGGI), 93–113 (GRITALIYIVPLIYFYFKDVI), 118–138 (ILPYIIALLLFCVQGFMGWYM), 154–174 (LAFHLIIAVIIYHILFYQLIK), and 192–212 (LIFSGIAITVIYVQIFLGAMV). A heme-binding site is contributed by His-256. Helical transmembrane passes span 258–278 (LGGYSVFLVVVVLVICLLKIE), 285–305 (IAYFLMIALLMQISTGIITLL), and 308–328 (VPIIIASIHQLFAIILLSIII). Residue His-316 coordinates heme.

The protein belongs to the COX15/CtaA family. Type 2 subfamily. In terms of assembly, interacts with CtaB. The cofactor is heme b.

The protein resides in the cell membrane. It carries out the reaction Fe(II)-heme o + 2 A + H2O = Fe(II)-heme a + 2 AH2. The protein operates within porphyrin-containing compound metabolism; heme A biosynthesis; heme A from heme O: step 1/1. In terms of biological role, catalyzes the conversion of heme O to heme A by two successive hydroxylations of the methyl group at C8. The first hydroxylation forms heme I, the second hydroxylation results in an unstable dihydroxymethyl group, which spontaneously dehydrates, resulting in the formyl group of heme A. The chain is Heme A synthase from Rickettsia felis (strain ATCC VR-1525 / URRWXCal2) (Rickettsia azadi).